The sequence spans 405 residues: Interferon alpha/beta receptor 1a (405 aa).

Residues 1–20 (MKVGFALVLLWSLPITNVLA) form the signal peptide. Residues 21-233 (ELPQPQNLTL…QTEGDTPYGQ (213 aa)) are Extracellular-facing. Fibronectin type-III domains follow at residues 22–123 (LPQP…IDAS) and 126–228 (PPSR…TEGD). N27 and N70 each carry an N-linked (GlcNAc...) asparagine glycan. 2 cysteine pairs are disulfide-bonded: C75–C83 and C201–C222. The N-linked (GlcNAc...) asparagine glycan is linked to N212. A helical transmembrane segment spans residues 234 to 254 (IFLYFLVSMMVCFLLVLLSSY). At 255-405 (AFFRFYRGLK…LDEGVVDICV (151 aa)) the chain is on the cytoplasmic side. Positions 325–374 (TAPPSELEQDSGRRIRQDSGDSGIYSTEGGSAQQGRSGGEPIRRDQEVDS) are disordered. The segment covering 334-343 (DSGRRIRQDS) has biased composition (basic and acidic residues). Residues 348–359 (IYSTEGGSAQQG) are compositionally biased toward polar residues.

The protein belongs to the type II cytokine receptor family. Heterodimer with IFNAR2; forming the receptor for type I interferon.

The protein localises to the cell membrane. Its function is as follows. Together with IFNAR2, forms the heterodimeric receptor for type I interferons (including interferons alpha, beta, epsilon, omega and kappa). Type I interferon binding activates the JAK-STAT signaling cascade, resulting in transcriptional activation or repression of interferon-regulated genes that encode the effectors of the interferon response. Mechanistically, type I interferon-binding brings the IFNAR1 and IFNAR2 subunits into close proximity with one another, driving their associated Janus kinases (JAKs) (TYK2 bound to IFNAR1 and JAK1 bound to IFNAR2) to cross-phosphorylate one another. The activated kinases phosphorylate specific tyrosine residues on the intracellular domains of IFNAR1 and IFNAR2, forming docking sites for the STAT transcription factors. STAT proteins are then phosphorylated by the JAKs, promoting their translocation into the nucleus to regulate expression of interferon-regulated genes. The protein is Interferon alpha/beta receptor 1a of Oncorhynchus mykiss (Rainbow trout).